The sequence spans 137 residues: Proofreading thioesterase EntH (137 aa).

The active-site Nucleophile or proton acceptor is Glu-63.

Belongs to the thioesterase PaaI family. In terms of assembly, homotetramer. Dimer of dimers. Interacts specifically with the aryl carrier protein (ArCP) domain of EntB.

The protein localises to the cytoplasm. It participates in siderophore biosynthesis; enterobactin biosynthesis. Its function is as follows. Required for optimal enterobactin synthesis. Acts as a proofreading enzyme that prevents EntB misacylation by hydrolyzing the thioester bound existing between EntB and wrongly charged molecules. The sequence is that of Proofreading thioesterase EntH from Escherichia coli O157:H7 (strain EC4115 / EHEC).